Reading from the N-terminus, the 593-residue chain is Proline--tRNA ligase (593 aa).

The protein belongs to the class-II aminoacyl-tRNA synthetase family. ProS type 1 subfamily. Homodimer.

Its subcellular location is the cytoplasm. It carries out the reaction tRNA(Pro) + L-proline + ATP = L-prolyl-tRNA(Pro) + AMP + diphosphate. Functionally, catalyzes the attachment of proline to tRNA(Pro) in a two-step reaction: proline is first activated by ATP to form Pro-AMP and then transferred to the acceptor end of tRNA(Pro). As ProRS can inadvertently accommodate and process non-cognate amino acids such as alanine and cysteine, to avoid such errors it has two additional distinct editing activities against alanine. One activity is designated as 'pretransfer' editing and involves the tRNA(Pro)-independent hydrolysis of activated Ala-AMP. The other activity is designated 'posttransfer' editing and involves deacylation of mischarged Ala-tRNA(Pro). The misacylated Cys-tRNA(Pro) is not edited by ProRS. The polypeptide is Proline--tRNA ligase (Parasynechococcus marenigrum (strain WH8102)).